Consider the following 299-residue polypeptide: Peroxisomal biogenesis factor 19 (299 aa).

A disordered region spans residues 1–63 (MAAAEEGCDA…SPGDTAKDAL (63 aa)). Position 2 is an N-acetylalanine (A2). The docking to the peroxisome membrane and binding to PEX3 stretch occupies residues 2–56 (AAAEEGCDAGVEADRELEELLESALDDFDKAKPSPAPPPTTSAPDASGPQKKSPG). The segment at 2–91 (AAAEEGCDAG…QATAEFEKAM (90 aa)) is necessary for PEX19 function on peroxisome biogenesis. Residues 16–27 (RELEELLESALD) are compositionally biased toward acidic residues. Phosphoserine is present on residues S35, S54, and S66. A Phosphothreonine modification is found at T236. Position 296 is a cysteine methyl ester (C296). C296 is lipidated: S-farnesyl cysteine. Residues 297 to 299 (LIM) constitute a propeptide, removed in mature form.

This sequence belongs to the peroxin-19 family. As to quaternary structure, interacts with a broad range of peroxisomal membrane proteins, including PEX3, PEX10, PEX11A, PEX11B, PEX12, PEX13, PEX14 and PEX16, PXMP2/PMP22, PXMP4/PMP24, SLC25A17/PMP34, ABCD1/ALDP, ABCD2/ALDRP, and ABCD3/PMP70. Also interacts with the tumor suppressor CDKN2A/p19ARF. In terms of tissue distribution, ubiquitous.

Its subcellular location is the cytoplasm. The protein localises to the peroxisome membrane. In terms of biological role, necessary for early peroxisomal biogenesis. Acts both as a cytosolic chaperone and as an import receptor for peroxisomal membrane proteins (PMPs). Binds and stabilizes newly synthesized PMPs in the cytoplasm by interacting with their hydrophobic membrane-spanning domains, and targets them to the peroxisome membrane by binding to the integral membrane protein PEX3. Excludes CDKN2A from the nucleus and prevents its interaction with MDM2, which results in active degradation of TP53. The sequence is that of Peroxisomal biogenesis factor 19 (PEX19) from Cricetulus griseus (Chinese hamster).